The primary structure comprises 181 residues: TATA-box-binding protein (181 aa).

Tandem repeats lie at residues 7–83 (IVNV…IKEL) and 98–173 (VQNM…SKTL).

It belongs to the TBP family.

Functionally, general factor that plays a role in the activation of archaeal genes transcribed by RNA polymerase. Binds specifically to the TATA box promoter element which lies close to the position of transcription initiation. The polypeptide is TATA-box-binding protein (Methanococcus maripaludis (strain C6 / ATCC BAA-1332)).